The sequence spans 557 residues: Aerobic glycerol-3-phosphate dehydrogenase (557 aa).

Position 21–49 (21–49 (DLVIIGGGITGAGIALDASERGMKVALVE)) interacts with FAD.

Belongs to the FAD-dependent glycerol-3-phosphate dehydrogenase family. Requires FAD as cofactor.

The protein localises to the cytoplasm. It carries out the reaction a quinone + sn-glycerol 3-phosphate = dihydroxyacetone phosphate + a quinol. Its pathway is polyol metabolism; glycerol degradation via glycerol kinase pathway; glycerone phosphate from sn-glycerol 3-phosphate (aerobic route): step 1/1. This is Aerobic glycerol-3-phosphate dehydrogenase (glpD) from Staphylococcus aureus (strain MRSA252).